The sequence spans 382 residues: MRLSTNPTLDRFDAVPAASYRPGHGAVRAWLYLLAVLVVAMVAVGGATRLTGSGLSITEWRPVTGVVPPLDAADWAVEFDKYRDTPQYRILNQGIGLDGFKTLYWWEWGHRLLGRIVGLVFFLPFAWFWARGMLGRRLLTGLLGLGLLGGLQGAIGWIMVASGLQPGMTAVAPLKLALHLTTASLILAGLVWLAAGTRPRALAPAPESVRVVACLLPALVLVQIWLGGLVAGSKAGLLYNTWPDMDGVLVPPARVLFDKVPFIENFIDNLALVQFNHRLFAYLVVAVAIAHAIQAARTASGSAAAGRAMGVAALATAQMGLGIATLLLHVPLWAGLAHQVFAMAVLIMATVHARLARGVPAAAAPTGAEVPIGLEALAGRGA.

8 helical membrane passes run 25-45 (GAVRAWLYLLAVLVVAMVAVG), 112-132 (LLGRIVGLVFFLPFAWFWARG), 141-161 (GLLGLGLLGGLQGAIGWIMVA), 176-196 (LALHLTTASLILAGLVWLAAG), 211-231 (VVACLLPALVLVQIWLGGLVA), 270-290 (LALVQFNHRLFAYLVVAVAIA), 303-323 (AAAGRAMGVAALATAQMGLGI), and 327-347 (LLHVPLWAGLAHQVFAMAVLI). Histidine 277 is a binding site for heme. A heme-binding site is contributed by histidine 338.

It belongs to the COX15/CtaA family. Type 2 subfamily. Interacts with CtaB. Heme b is required as a cofactor.

The protein resides in the cell membrane. It catalyses the reaction Fe(II)-heme o + 2 A + H2O = Fe(II)-heme a + 2 AH2. The protein operates within porphyrin-containing compound metabolism; heme A biosynthesis; heme A from heme O: step 1/1. Catalyzes the conversion of heme O to heme A by two successive hydroxylations of the methyl group at C8. The first hydroxylation forms heme I, the second hydroxylation results in an unstable dihydroxymethyl group, which spontaneously dehydrates, resulting in the formyl group of heme A. The polypeptide is Heme A synthase (Methylorubrum extorquens (strain CM4 / NCIMB 13688) (Methylobacterium extorquens)).